A 207-amino-acid polypeptide reads, in one-letter code: MTSRKKVLLKVIILGDSGVGKTSLMNQYVNKKFSNQYKATIGADFLTKEVMVDDRLVTMQIWDTAGQERFQSLGVAFYRGADCCVLVFDVTAPNTFKTLDSWRDEFLIQASPRDPENFPFVVLGNKIDLENRQVATKRAQAWCYSKNNIPYFETSAKEAINVEQAFQTIARNALKQETEVELYNEFPEPIKLDKNDRAKTSAESCSC.

T2 bears the N-acetylthreonine mark. Residues S17, G18, V19, G20, K21, T22, S23, S34, N35, Y37, and T40 each coordinate GTP. Mg(2+) is bound at residue T22. The short motif at 28–41 is the Switch 1 element; the sequence is YVNKKFSNQYKATI. Residues T40 and D63 each contribute to the Mg(2+) site. GTP is bound at residue G66. A Switch 2 motif is present at residues 67–82; the sequence is QERFQSLGVAFYRGAD. At S72 the chain carries Phosphoserine. GTP contacts are provided by N125, K126, D128, A156, and K157. Glycyl lysine isopeptide (Lys-Gly) (interchain with G-Cter in ubiquitin) cross-links involve residues K191 and K194. Residues C205 and C207 are each lipidated (S-geranylgeranyl cysteine). Residue C207 is modified to Cysteine methyl ester.

It belongs to the small GTPase superfamily. Rab family. In terms of assembly, interacts with NTRK1/TRKA. Interacts with RILP. Interacts with PSMA7. Interacts with RNF115. Interacts with FYCO1. Interacts with the PIK3C3/VPS34-PIK3R4 complex. The GTP-bound form interacts with OSBPL1A. The GTP-bound form interacts with RAC1. Interacts with CLN3. Interacts with CHM, the substrate-binding subunit of the Rab geranylgeranyltransferase complex. Interacts with C9orf72. Does not interact with HPS4 and the BLOC-3 complex (heterodimer of HPS1 and HPS4). Interacts with CLN5. Interacts with PLEKHM1 (via N- and C-terminus). Interacts with PRPH; the interaction is direct. Interacts with VPS13A. The GDP-bound form interacts with RIMOC1. Interacts with the MON1A-CCZ1B complex and this interaction is enhanced in the presence of RIMOC1. Interacts with VPS39 and VPS41. Forms a ternary complex with LAMP2 and RUFY4; the interaction with LAMP2 is mediated by RUFY4 (via RUN and coiled coil domains). It depends on Mg(2+) as a cofactor. Post-translationally, deubiquitination at Lys-191 and Lys-194 by USP32. Phosphorylated at Ser-72 by LRRK1; phosphorylation is dependent on protein kinase C (PKC) activation of LRRK1. In terms of processing, prenylated. Prenylation is required for association with cellular membranes.

The protein resides in the cytoplasmic vesicle. Its subcellular location is the phagosome membrane. It is found in the late endosome membrane. It localises to the lysosome membrane. The protein localises to the melanosome membrane. The protein resides in the autophagosome membrane. Its subcellular location is the lipid droplet. It is found in the endosome membrane. It localises to the mitochondrion membrane. It catalyses the reaction GTP + H2O = GDP + phosphate + H(+). Its activity is regulated as follows. Regulated by guanine nucleotide exchange factors (GEFs) which promote the exchange of bound GDP for free GTP. Regulated by GTPase activating proteins (GAPs) which increase the GTP hydrolysis activity. Inhibited by GDP dissociation inhibitors (GDIs). Its function is as follows. The small GTPases Rab are key regulators of intracellular membrane trafficking, from the formation of transport vesicles to their fusion with membranes. Rabs cycle between an inactive GDP-bound form and an active GTP-bound form that is able to recruit to membranes different sets of downstream effectors directly responsible for vesicle formation, movement, tethering and fusion. In its active state, RAB7A binds to a variety of effector proteins playing a key role in the regulation of endo-lysosomal trafficking. Governs early-to-late endosomal maturation, microtubule minus-end as well as plus-end directed endosomal migration and positioning, and endosome-lysosome transport through different protein-protein interaction cascades. Also plays a central role in growth-factor-mediated cell signaling, nutrient-transporter-mediated nutrient uptake, neurotrophin transport in the axons of neurons and lipid metabolism. Also involved in regulation of some specialized endosomal membrane trafficking, such as maturation of melanosomes, pathogen-induced phagosomes (or vacuoles) and autophagosomes. Plays a role in the maturation and acidification of phagosomes that engulf pathogens, such as S.aureus and Mycobacteria. Plays a role in the fusion of phagosomes with lysosomes. In concert with RAC1, plays a role in regulating the formation of RBs (ruffled borders) in osteoclasts. Controls the endosomal trafficking and neurite outgrowth signaling of NTRK1/TRKA. Regulates the endocytic trafficking of the EGF-EGFR complex by regulating its lysosomal degradation. Involved in the ADRB2-stimulated lipolysis through lipophagy, a cytosolic lipase-independent autophagic pathway. Required for the exosomal release of SDCBP, CD63 and syndecan. Required for vesicular trafficking and cell surface expression of ACE2. May play a role in PRPH neuronal intermediate filament assembly. The polypeptide is Ras-related protein Rab-7a (RAB7A) (Canis lupus familiaris (Dog)).